Here is a 3003-residue protein sequence, read N- to C-terminus: MAX gene-associated protein (3003 aa).

Glycyl lysine isopeptide (Lys-Gly) (interchain with G-Cter in SUMO2) cross-links involve residues lysine 4 and lysine 178. Residues 84–260 (MWNEFHNRST…YNPFAKGFRD (177 aa)) constitute a DNA-binding region (T-box). Over residues 259–277 (RDDGLSSKPQREGKQRNSS) the composition is skewed to basic and acidic residues. The disordered stretch occupies residues 259–290 (RDDGLSSKPQREGKQRNSSDQEGNSVSSSPAH). The segment covering 278 to 288 (DQEGNSVSSSP) has biased composition (polar residues). Residues lysine 323, lysine 329, lysine 348, lysine 431, lysine 458, lysine 463, and lysine 480 each participate in a glycyl lysine isopeptide (Lys-Gly) (interchain with G-Cter in SUMO2) cross-link. Serine 531 carries the phosphoserine modification. Residues 553–647 (ILDNSSTERI…NIPVGPGSTF (95 aa)) form a disordered region. Lysine 567 participates in a covalent cross-link: Glycyl lysine isopeptide (Lys-Gly) (interchain with G-Cter in SUMO2). The span at 595-607 (KTVTASHSASPNT) shows a compositional bias: polar residues. Phosphoserine is present on serine 604. Residues lysine 610, lysine 651, lysine 782, lysine 788, lysine 814, and lysine 823 each participate in a glycyl lysine isopeptide (Lys-Gly) (interchain with G-Cter in SUMO2) cross-link. Basic residues predominate over residues 610 to 621 (KRGRPRKLRLSK). Residue serine 848 is modified to Phosphoserine. Polar residues predominate over residues 871–913 (KQSTISPSTSHSVKPQSVTTASRKTKAQNKQTTLSGRTKSSYK). 2 disordered regions span residues 871–946 (KQST…TSDN) and 967–987 (LRQA…GLSK). Phosphoserine is present on serine 921. Lysine 925 is covalently cross-linked (Glycyl lysine isopeptide (Lys-Gly) (interchain with G-Cter in SUMO2)). Positions 937–946 (KNSLSSTSDN) are enriched in polar residues. Positions 969–978 (QAQQQHLQQQ) are enriched in low complexity. Glycyl lysine isopeptide (Lys-Gly) (interchain with G-Cter in SUMO2) cross-links involve residues lysine 987 and lysine 1088. Positions 1111 to 1130 (LGEEGREGGGVREDEEQLKE) are disordered. The span at 1113 to 1122 (EEGREGGGVR) shows a compositional bias: basic and acidic residues. Glycyl lysine isopeptide (Lys-Gly) (interchain with G-Cter in SUMO2) cross-links involve residues lysine 1136, lysine 1158, lysine 1194, and lysine 1202. Disordered regions lie at residues 1186–1215 (QPDL…NPVI), 1246–1277 (QRQL…TKEL), 1297–1323 (SQEK…RSPG), and 1376–1424 (RGEK…DISP). Low complexity-rich tracts occupy residues 1248–1269 (QLSP…YSSP) and 1303–1315 (KSSC…SSTS). Serine 1423 and serine 1450 each carry phosphoserine. Residues lysine 1454 and lysine 1495 each participate in a glycyl lysine isopeptide (Lys-Gly) (interchain with G-Cter in SUMO2) cross-link. Disordered regions lie at residues 1476–1508 (AKVA…RSGK), 1722–1746 (PPVS…SNNV), 1856–1885 (ISPP…PVGT), 1920–1954 (IKKE…KALD), 1964–1983 (SGII…GGDL), and 1988–2038 (TLRE…AGSK). Composition is skewed to polar residues over residues 1488–1507 (LPST…NRSG), 1735–1746 (PVTTPQISSNNV), and 1859–1880 (PETQ…STGG). Glycyl lysine isopeptide (Lys-Gly) (interchain with G-Cter in SUMO2) cross-links involve residues lysine 1937 and lysine 1944. The span at 1964-1976 (SGIIASENTSNNS) shows a compositional bias: polar residues. Glycyl lysine isopeptide (Lys-Gly) (interchain with G-Cter in SUMO2) cross-links involve residues lysine 2060 and lysine 2084. Positions 2087–2110 (LSGNQVKEQQSNSQAEAKKDCEDS) are disordered. Polar residues predominate over residues 2088-2101 (SGNQVKEQQSNSQA). Glycyl lysine isopeptide (Lys-Gly) (interchain with G-Cter in SUMO2) cross-links involve residues lysine 2104, lysine 2152, and lysine 2179. Omega-N-methylarginine is present on arginine 2206. The segment at 2207-2255 (GSRHFQGHLLLPREQMKPKQQTKDGRSSAADFTVLDLEDEDEEDEKTDD) is disordered. Positions 2220 to 2232 (EQMKPKQQTKDGR) are enriched in basic and acidic residues. Lysine 2225 is covalently cross-linked (Glycyl lysine isopeptide (Lys-Gly) (interchain with G-Cter in SUMO2)). The segment covering 2242 to 2255 (DLEDEDEEDEKTDD) has biased composition (acidic residues). Glycyl lysine isopeptide (Lys-Gly) (interchain with G-Cter in SUMO2) cross-links involve residues lysine 2317, lysine 2352, lysine 2396, and lysine 2471. The region spanning 2362–2413 (YYRRTHTANERRRRGEMRDLFEKLKITLGLLHSSKVSKSLILNRAFSEIQGL) is the bHLH domain. Serine 2480 carries the phosphoserine modification. Residues 2515-2534 (KRDQATENASPSDTPHSSAN) are disordered. Over residues 2520–2534 (TENASPSDTPHSSAN) the composition is skewed to polar residues. Residues lysine 2568 and lysine 2618 each participate in a glycyl lysine isopeptide (Lys-Gly) (interchain with G-Cter in SUMO2) cross-link. Residues 2629 to 2651 (SEASSLKDTERISSRGNHRDSRK) show a composition bias toward basic and acidic residues. The segment at 2629–2654 (SEASSLKDTERISSRGNHRDSRKALG) is disordered. Residue lysine 2724 forms a Glycyl lysine isopeptide (Lys-Gly) (interchain with G-Cter in SUMO2) linkage. Serine 2849 and serine 2860 each carry phosphoserine. Positions 2877 to 2917 (LVSHRKSSDGGQSTSGLPAEPESVSSPPILHMKTGPENSNT) are disordered. Lysine 2979 participates in a covalent cross-link: Glycyl lysine isopeptide (Lys-Gly) (interchain with G-Cter in SUMO2).

Component of some MLL1/MLL complex, at least composed of the core components KMT2A/MLL1, ASH2L, HCFC1/HCF1, WDR5 and RBBP5, as well as the facultative components BACC1, CHD8, E2F6, HSP70, INO80C, KANSL1, LAS1L, MAX, MCRS1, MGA, MYST1/MOF, PELP1, PHF20, PRP31, RING2, RUVB1/TIP49A, RUVB2/TIP49B, SENP3, TAF1, TAF4, TAF6, TAF7, TAF9 and TEX10. Interacts with ZMYND11. Interacts with MAX. Requires heterodimerization with MAX for E-box binding. As to expression, highly expressed in germ cells and granulosa cells.

It localises to the nucleus. In terms of biological role, functions as a dual-specificity transcription factor, regulating the expression of both MAX-network and T-box family target genes. Functions as a repressor or an activator. Binds to 5'-AATTTCACACCTAGGTGTGAAATT-3' core sequence and seems to regulate MYC-MAX target genes. Suppresses transcriptional activation by MYC and inhibits MYC-dependent cell transformation. Function activated by heterodimerization with MAX. This heterodimerization serves the dual function of both generating an E-box-binding heterodimer and simultaneously blocking interaction of a corepressor. This chain is MAX gene-associated protein, found in Mus musculus (Mouse).